The following is a 193-amino-acid chain: Glycerol-3-phosphate acyltransferase (193 aa).

5 helical membrane passes run 4 to 24 (LALI…AVLI), 56 to 76 (GLVL…GYFL), 80 to 100 (PLLL…PLFF), 116 to 136 (APIG…IVLI), and 152 to 174 (PLFT…CLIV).

The protein belongs to the PlsY family. In terms of assembly, probably interacts with PlsX.

Its subcellular location is the cell inner membrane. The enzyme catalyses an acyl phosphate + sn-glycerol 3-phosphate = a 1-acyl-sn-glycero-3-phosphate + phosphate. It participates in lipid metabolism; phospholipid metabolism. In terms of biological role, catalyzes the transfer of an acyl group from acyl-phosphate (acyl-PO(4)) to glycerol-3-phosphate (G3P) to form lysophosphatidic acid (LPA). This enzyme utilizes acyl-phosphate as fatty acyl donor, but not acyl-CoA or acyl-ACP. This Aliivibrio salmonicida (strain LFI1238) (Vibrio salmonicida (strain LFI1238)) protein is Glycerol-3-phosphate acyltransferase.